The chain runs to 223 residues: Deoxyribose-phosphate aldolase (223 aa).

The active-site Proton donor/acceptor is Asp89. Residue Lys152 is the Schiff-base intermediate with acetaldehyde of the active site. Lys181 functions as the Proton donor/acceptor in the catalytic mechanism.

This sequence belongs to the DeoC/FbaB aldolase family. DeoC type 1 subfamily.

The protein localises to the cytoplasm. The catalysed reaction is 2-deoxy-D-ribose 5-phosphate = D-glyceraldehyde 3-phosphate + acetaldehyde. The protein operates within carbohydrate degradation; 2-deoxy-D-ribose 1-phosphate degradation; D-glyceraldehyde 3-phosphate and acetaldehyde from 2-deoxy-alpha-D-ribose 1-phosphate: step 2/2. In terms of biological role, catalyzes a reversible aldol reaction between acetaldehyde and D-glyceraldehyde 3-phosphate to generate 2-deoxy-D-ribose 5-phosphate. The polypeptide is Deoxyribose-phosphate aldolase (Listeria monocytogenes serovar 1/2a (strain ATCC BAA-679 / EGD-e)).